The following is a 157-amino-acid chain: Small ribosomal subunit protein bS6 (157 aa).

Basic and acidic residues predominate over residues 96–151 (HEEGPSAMMRKADRDRDRDERGGGGFRGDREGGFRGDREGGGFRGDRGPRRPRDDA). The interval 96–157 (HEEGPSAMMR…RDDAPAATEE (62 aa)) is disordered.

Belongs to the bacterial ribosomal protein bS6 family.

Functionally, binds together with bS18 to 16S ribosomal RNA. This is Small ribosomal subunit protein bS6 from Rhodopseudomonas palustris (strain BisA53).